We begin with the raw amino-acid sequence, 1041 residues long: FHIP family protein CG3558 (1041 aa).

Phosphoserine is present on Ser490. Disordered stretches follow at residues 619–648, 792–818, 858–879, 903–947, and 959–986; these read RPADEESEATDTTVATTASEADMDHNSSSL, KGNEGSPMHHSQQQQMVTNSGQQQGQL, SMFSRKSASTSTAPPNGSSASS, DGRG…SNSS, and SNTTTHSASTLHGLDGGPSTGGFNSEPA. The span at 628-637 shows a compositional bias: polar residues; the sequence is TDTTVATTAS. Ser797 bears the Phosphoserine mark. Polar residues predominate over residues 800–818; sequence HHSQQQQMVTNSGQQQGQL. The span at 903–925 shows a compositional bias: polar residues; the sequence is DGRGISQAQTSAGTCETSLSTQP. The segment covering 927–947 has biased composition (low complexity); it reads AGASRTGANATSTAASGSNSS. Residues 959-968 show a composition bias toward polar residues; the sequence is SNTTTHSAST.

This sequence belongs to the FHIP family.

The polypeptide is FHIP family protein CG3558 (Drosophila melanogaster (Fruit fly)).